A 168-amino-acid polypeptide reads, in one-letter code: Peptide deformylase 2 (168 aa).

2 residues coordinate Fe cation: C91 and H133. E134 is an active-site residue. H137 lines the Fe cation pocket.

The protein belongs to the polypeptide deformylase family. It depends on Fe(2+) as a cofactor.

The enzyme catalyses N-terminal N-formyl-L-methionyl-[peptide] + H2O = N-terminal L-methionyl-[peptide] + formate. Functionally, removes the formyl group from the N-terminal Met of newly synthesized proteins. Requires at least a dipeptide for an efficient rate of reaction. N-terminal L-methionine is a prerequisite for activity but the enzyme has broad specificity at other positions. The chain is Peptide deformylase 2 from Vibrio parahaemolyticus serotype O3:K6 (strain RIMD 2210633).